We begin with the raw amino-acid sequence, 197 residues long: Presequence translocated-associated motor subunit PAM17, mitochondrial (197 aa).

A mitochondrion-targeting transit peptide spans 1–14 (MFTSAIRLSSQRLF). Helical transmembrane passes span 64-84 (INVG…WAYL) and 103-123 (VISA…PIVG).

It belongs to the PAM17 family. In terms of assembly, component of the PAM complex, at least composed of mtHsp70, MGE1, TIM44, PAM16, PAM17 and PAM18/TIM14.

It localises to the mitochondrion inner membrane. Functionally, component of the PAM complex, a complex required for the translocation of transit peptide-containing proteins from the inner membrane into the mitochondrial matrix in an ATP-dependent manner. In the complex, it is required to organize PAM16-PAM18 (TIM16-TIM14) heterodimer. The protein is Presequence translocated-associated motor subunit PAM17, mitochondrial (PAM17) of Saccharomyces cerevisiae (strain ATCC 204508 / S288c) (Baker's yeast).